Reading from the N-terminus, the 279-residue chain is MDLYENQRSTSKIKRDASVNDRIPDGLFLACPYCGTQMYNKQLGDYRVCAKCGYGFRLQARERVALLTDNFEEMDADIEMTTPDFPGYAEKLARAKSQTDLGESVLTGVANIEGEQVALGVMDSYFMMGSLGSMTGEKITRLFEYATAHQLPVVLFTASGGARMQEGINSLMQMAKVSAAVAAHQEAGLLYLVVLTDPTTGGVTASFAMQGDVTLAEPHALVGFAGARVIESTIHEKLPKDFQRVETLLENGFVDKIVPRAELGQIIAKIVKLHHRTEI.

The region spanning 27-279 is the CoA carboxyltransferase N-terminal domain; that stretch reads LFLACPYCGT…IVKLHHRTEI (253 aa). Positions 31, 34, 49, and 52 each coordinate Zn(2+). A C4-type zinc finger spans residues 31–52; the sequence is CPYCGTQMYNKQLGDYRVCAKC.

This sequence belongs to the AccD/PCCB family. In terms of assembly, acetyl-CoA carboxylase is a heterohexamer composed of biotin carboxyl carrier protein (AccB), biotin carboxylase (AccC) and two subunits each of ACCase subunit alpha (AccA) and ACCase subunit beta (AccD). Zn(2+) serves as cofactor.

The protein resides in the cytoplasm. It carries out the reaction N(6)-carboxybiotinyl-L-lysyl-[protein] + acetyl-CoA = N(6)-biotinyl-L-lysyl-[protein] + malonyl-CoA. It participates in lipid metabolism; malonyl-CoA biosynthesis; malonyl-CoA from acetyl-CoA: step 1/1. Component of the acetyl coenzyme A carboxylase (ACC) complex. Biotin carboxylase (BC) catalyzes the carboxylation of biotin on its carrier protein (BCCP) and then the CO(2) group is transferred by the transcarboxylase to acetyl-CoA to form malonyl-CoA. This Leuconostoc citreum (strain KM20) protein is Acetyl-coenzyme A carboxylase carboxyl transferase subunit beta.